A 205-amino-acid chain; its full sequence is Putative 3-methyladenine DNA glycosylase (205 aa).

Belongs to the DNA glycosylase MPG family.

This Clostridium perfringens (strain SM101 / Type A) protein is Putative 3-methyladenine DNA glycosylase.